The following is a 212-amino-acid chain: Peptide methionine sulfoxide reductase MsrA (212 aa).

Cys51 is an active-site residue.

The protein belongs to the MsrA Met sulfoxide reductase family.

The catalysed reaction is L-methionyl-[protein] + [thioredoxin]-disulfide + H2O = L-methionyl-(S)-S-oxide-[protein] + [thioredoxin]-dithiol. The enzyme catalyses [thioredoxin]-disulfide + L-methionine + H2O = L-methionine (S)-S-oxide + [thioredoxin]-dithiol. Has an important function as a repair enzyme for proteins that have been inactivated by oxidation. Catalyzes the reversible oxidation-reduction of methionine sulfoxide in proteins to methionine. The sequence is that of Peptide methionine sulfoxide reductase MsrA from Vibrio parahaemolyticus serotype O3:K6 (strain RIMD 2210633).